Consider the following 161-residue polypeptide: UPF0262 protein SPOA0072 (161 aa).

The segment at 1 to 21 is disordered; that stretch reads MTMSRISHIELDDSNLPPPTP.

The protein belongs to the UPF0262 family.

This Ruegeria pomeroyi (strain ATCC 700808 / DSM 15171 / DSS-3) (Silicibacter pomeroyi) protein is UPF0262 protein SPOA0072.